The sequence spans 256 residues: Protein FixA (256 aa).

The protein belongs to the ETF beta-subunit/FixA family. As to quaternary structure, heterodimer of FixA and FixB.

It functions in the pathway amine and polyamine metabolism; carnitine metabolism. In terms of biological role, required for anaerobic carnitine reduction. May bring reductant to CaiA. The chain is Protein FixA from Escherichia coli O81 (strain ED1a).